The sequence spans 90 residues: Co-chaperonin GroES (90 aa).

The protein belongs to the GroES chaperonin family. Heptamer of 7 subunits arranged in a ring. Interacts with the chaperonin GroEL.

Its subcellular location is the cytoplasm. In terms of biological role, together with the chaperonin GroEL, plays an essential role in assisting protein folding. The GroEL-GroES system forms a nano-cage that allows encapsulation of the non-native substrate proteins and provides a physical environment optimized to promote and accelerate protein folding. GroES binds to the apical surface of the GroEL ring, thereby capping the opening of the GroEL channel. The chain is Co-chaperonin GroES from Fusobacterium nucleatum subsp. polymorphum (Fusobacterium polymorphum).